The sequence spans 122 residues: Basic phospholipase A2 homolog myotoxin II (122 aa).

Intrachain disulfides connect cysteine 26/cysteine 116, cysteine 28/cysteine 44, cysteine 43/cysteine 95, cysteine 49/cysteine 122, cysteine 50/cysteine 88, cysteine 57/cysteine 81, and cysteine 75/cysteine 86. The tract at residues 105–118 (KKYRYNYLKPFCKK) is important for membrane-damaging activities in eukaryotes and bacteria; heparin-binding.

This sequence belongs to the phospholipase A2 family. Group II subfamily. K49 sub-subfamily. Homodimer; non-covalently linked (probable alternative/compact dimer conformation). Expressed by the venom gland.

The protein resides in the secreted. Myotoxic activity is inhibited by suramin and rosmarinic acid. Cytotoxic and myotoxic activities are inhibited by pre-incubation with varespladib. Suramin inhibits this myotoxin by (i) direct blockage of the MDoS and MDiS, preventing the toxin/membrane interaction and disruption and (ii) formation of an oligomeric complex, resulting in a tetrameric configuration for which both MDoS and MDiS becomes physically inaccessible, thus avoiding any possibility of toxin-membrane interaction or disruption. Heparin completely inhibits the cytotoxic and bactericidal activities, but only partially the myotoxic, edema-inducing and lethal effects. Functionally, snake venom phospholipase A2 (PLA2) homolog that lacks enzymatic activity. Shows high myotoxin activities. Also shows neurotoxicity, since it induces muscle paralysis when tested on mouse phrenic-diaphragm preparations. Displays edema-inducing activities. Also displays antimicrobial activity against E.coli and C.albicans, as well as antitumoral activity against some human and mice cell lines. In addition, it is effective as parasiticidal agent against Leishmania sp. and S.mansoni. It also disrupts negatively charged liposomes in a dose- and temperature-dependent manner and shows toxicity by intraperitoneal route. In contrast to other phospholipase A2-like toxins, this myotoxin does not require fatty acid binding to be active. The sequence is that of Basic phospholipase A2 homolog myotoxin II from Bothrops moojeni (Lance-headed viper).